The chain runs to 382 residues: MDFGLALLLAGLLGLLLGQSLQVKPLQVEPPEPVVAVALGASRQLTCRLACADRGASVQWRGLDTSLGAVQSDTGRSVLTVRNASLSAAGTRVCVGSCGGRTFQHTVQLLVYAFPDQLTVSPAALVPGDPEVACTAHKVTPVDPNALSFSLLVGGQELEGAQALGPEVQEEEEEPQGDEDVLFRVTERWRLPPLGTPVPPALYCQATMRLPGLELSHRQAIPVLHSPTSPEPPDTTSPESPDTTSPESPDTTSQEPPDTTSPEPPDKTSPEPAPQQGSTHTPRSPGSTRTRRPEISQAGPTQGEVIPTGSSKPAGDQLPAALWTSSAVLGLLLLALPTYHLWKRCRHLAEDDTHPPASLRLLPQVSAWAGLRGTGQVGISPS.

An N-terminal signal peptide occupies residues 1–18; it reads MDFGLALLLAGLLGLLLG. Topologically, residues 19-317 are extracellular; it reads QSLQVKPLQV…TGSSKPAGDQ (299 aa). Ig-like domains follow at residues 23–112 and 113–231; these read VKPL…LLVY and AFPD…TSPE. Disulfide bonds link cysteine 47-cysteine 94, cysteine 51-cysteine 98, and cysteine 134-cysteine 204. Asparagine 83 carries an N-linked (GlcNAc...) asparagine glycan. The segment at 223–314 is disordered; sequence VLHSPTSPEP…VIPTGSSKPA (92 aa). The mucin-like stretch occupies residues 226-317; it reads SPTSPEPPDT…TGSSKPAGDQ (92 aa). The stretch at 228–231 is one 1; truncated repeat; sequence TSPE. The segment at 228–271 is 5.5 X 8 AA tandem repeats of [PS]-P-D-T-T-S-[QP]-E; it reads TSPEPPDTTSPESPDTTSPESPDTTSQEPPDTTSPEPPDKTSPE. 5 consecutive repeat copies span residues 232 to 239, 240 to 247, 248 to 255, 256 to 263, and 264 to 271. Residues 236-261 are compositionally biased toward low complexity; sequence TSPESPDTTSPESPDTTSQEPPDTTS. Over residues 277 to 288 the composition is skewed to low complexity; the sequence is GSTHTPRSPGST. A helical transmembrane segment spans residues 318-338; the sequence is LPAALWTSSAVLGLLLLALPT. Residues 339-382 are Cytoplasmic-facing; that stretch reads YHLWKRCRHLAEDDTHPPASLRLLPQVSAWAGLRGTGQVGISPS.

Homodimer. Post-translationally, the Ser/Thr-rich mucin-like domain may provide possible sites for O-glycosylation. In terms of tissue distribution, highly expressed on high endothelial venules (HEV) and lamina propia venules found in the small intestine, and to a lesser extent in the colon and spleen. Very low levels of expression found in pancreas and brain. Not expressed in the thymus, prostate, ovaries, testis, heart, placenta, lung, liver, skeletal muscle, kidney or peripheral blood leukocytes.

The protein resides in the membrane. In terms of biological role, cell adhesion leukocyte receptor expressed by mucosal venules, helps to direct lymphocyte traffic into mucosal tissues including the Peyer patches and the intestinal lamina propria. It can bind both integrin alpha-4/beta-7 and L-selectin, regulating both the passage and retention of leukocytes. Isoform 2, lacking the mucin-like domain, may be specialized in supporting integrin alpha-4/beta-7-dependent adhesion strengthening, independent of L-selectin binding. In Homo sapiens (Human), this protein is Mucosal addressin cell adhesion molecule 1 (MADCAM1).